The chain runs to 258 residues: Phosphoribosylaminoimidazole-succinocarboxamide synthase (258 aa).

This sequence belongs to the SAICAR synthetase family.

It carries out the reaction 5-amino-1-(5-phospho-D-ribosyl)imidazole-4-carboxylate + L-aspartate + ATP = (2S)-2-[5-amino-1-(5-phospho-beta-D-ribosyl)imidazole-4-carboxamido]succinate + ADP + phosphate + 2 H(+). The protein operates within purine metabolism; IMP biosynthesis via de novo pathway; 5-amino-1-(5-phospho-D-ribosyl)imidazole-4-carboxamide from 5-amino-1-(5-phospho-D-ribosyl)imidazole-4-carboxylate: step 1/2. The sequence is that of Phosphoribosylaminoimidazole-succinocarboxamide synthase from Sphingopyxis alaskensis (strain DSM 13593 / LMG 18877 / RB2256) (Sphingomonas alaskensis).